The primary structure comprises 672 residues: uncharacterized protein (672 aa).

A compositionally biased stretch (basic and acidic residues) spans 1 to 10; sequence MAKSDGDDPL. Positions 1–41 are disordered; it reads MAKSDGDDPLRPASPRLRSSRRHSLRYSAYTGGPDPLAPPV.

This is an uncharacterized protein from Mycobacterium bovis (strain ATCC BAA-935 / AF2122/97).